We begin with the raw amino-acid sequence, 482 residues long: Caspase-8 (482 aa).

Positions 1–218 (MDFHSCLYDI…DMWDSPGEQE (218 aa)) are excised as a propeptide. DED domains lie at 2–80 (DFHS…RVLK) and 100–177 (AYRV…RIDD). A phosphoserine mark is found at Ser188 and Ser213. His319 is an active-site residue. At Tyr336 the chain carries Phosphotyrosine. The active site involves Cys362. A propeptide spanning residues 379 to 388 (LEQEHVLEED) is cleaved from the precursor. Ser390 carries the post-translational modification Phosphoserine; by CDK1.

This sequence belongs to the peptidase C14A family. In terms of assembly, heterotetramer that consists of two anti-parallel arranged heterodimers, each one formed by a 18 kDa (p18) and a 10 kDa (p10) subunit. Component of the death-induced signaling complex (DISC) composed of cell surface receptor FAS/CD95 or TNFRSF1A, adapter protein FADD and the CASP8 protease; recruitment of CASP8 to the complex is required for processing of CASP8 into the p18 and p10 subunits. Component of the AIM2 PANoptosome complex, a multiprotein complex that drives inflammatory cell death (PANoptosis). Interacts with CFLAR and PEA15. Interacts with RFFL and RNF34; negatively regulate CASP8 through proteasomal degradation. Interacts with TNFAIP8L2. Interacts with CASP8AP2. Interacts with NOL3; decreases CASP8 activity in a mitochondria localization- and phosphorylation-dependent manner and this interaction is dissociated by calcium. Interacts with UBR2. Interacts with RIPK1. Interacts with stimulated TNFRSF10B; this interaction is followed by CASP8 proteolytic cleavage and activation. In terms of processing, generation of the subunits requires association with the death-inducing signaling complex (DISC), whereas additional processing is likely due to the autocatalytic activity of the activated protease. GZMB and CASP10 can be involved in these processing events. Phosphorylation on Ser-389 during mitosis by CDK1 inhibits activation by proteolysis and prevents apoptosis. This phosphorylation occurs in cancer cell lines, as well as in primary breast tissues and lymphocytes.

The protein resides in the cytoplasm. Its subcellular location is the nucleus. It carries out the reaction Strict requirement for Asp at position P1 and has a preferred cleavage sequence of (Leu/Asp/Val)-Glu-Thr-Asp-|-(Gly/Ser/Ala).. CASP8 activity is restricted by RIPK1. In terms of biological role, thiol protease that plays a key role in programmed cell death by acting as a molecular switch for apoptosis, necroptosis and pyroptosis, and is required to prevent tissue damage during embryonic development and adulthood. Initiator protease that induces extrinsic apoptosis by mediating cleavage and activation of effector caspases responsible for FAS/CD95-mediated and TNFRSF1A-induced cell death. Cleaves and activates effector caspases CASP3, CASP4, CASP6, CASP7, CASP9 and CASP10. Binding to the adapter molecule FADD recruits it to either receptor FAS/CD95 or TNFRSF1A. The resulting aggregate called the death-inducing signaling complex (DISC) performs CASP8 proteolytic activation. The active dimeric enzyme is then liberated from the DISC and free to activate downstream apoptotic proteases. Proteolytic fragments of the N-terminal propeptide (termed CAP3, CAP5 and CAP6) are likely retained in the DISC. In addition to extrinsic apoptosis, also acts as a negative regulator of necroptosis: acts by cleaving RIPK1 at 'Asp-325', which is crucial to inhibit RIPK1 kinase activity, limiting TNF-induced apoptosis, necroptosis and inflammatory response. Also able to initiate pyroptosis by mediating cleavage and activation of gasdermin-C and -D (GSDMC and GSDMD, respectively): gasdermin cleavage promotes release of the N-terminal moiety that binds to membranes and forms pores, triggering pyroptosis. Initiates pyroptosis following inactivation of MAP3K7/TAK1. Also acts as a regulator of innate immunity by mediating cleavage and inactivation of N4BP1 downstream of TLR3 or TLR4, thereby promoting cytokine production. May participate in the Granzyme B (GZMB) cell death pathways. Cleaves PARP1 and PARP2. This chain is Caspase-8, found in Rattus norvegicus (Rat).